The chain runs to 218 residues: Small ribosomal subunit protein uS3 (218 aa).

The KH type-2 domain maps to 38 to 106 (IRTFLKKKLY…KLVVDIKEVK (69 aa)).

This sequence belongs to the universal ribosomal protein uS3 family. Part of the 30S ribosomal subunit. Forms a tight complex with proteins S10 and S14.

In terms of biological role, binds the lower part of the 30S subunit head. Binds mRNA in the 70S ribosome, positioning it for translation. The polypeptide is Small ribosomal subunit protein uS3 (Agathobacter rectalis (strain ATCC 33656 / DSM 3377 / JCM 17463 / KCTC 5835 / VPI 0990) (Eubacterium rectale)).